Here is a 370-residue protein sequence, read N- to C-terminus: Dual-specificity RNA methyltransferase RlmN (370 aa).

The active-site Proton acceptor is the E93. A Radical SAM core domain is found at 99–337 (EEGRGTLCVS…VTTVRKTRGD (239 aa)). C106 and C343 are oxidised to a cystine. [4Fe-4S] cluster-binding residues include C113, C117, and C120. Residues 167 to 168 (GE), S199, 221 to 223 (SLH), and N300 each bind S-adenosyl-L-methionine. C343 acts as the S-methylcysteine intermediate in catalysis.

This sequence belongs to the radical SAM superfamily. RlmN family. The cofactor is [4Fe-4S] cluster.

It localises to the cytoplasm. It carries out the reaction adenosine(2503) in 23S rRNA + 2 reduced [2Fe-2S]-[ferredoxin] + 2 S-adenosyl-L-methionine = 2-methyladenosine(2503) in 23S rRNA + 5'-deoxyadenosine + L-methionine + 2 oxidized [2Fe-2S]-[ferredoxin] + S-adenosyl-L-homocysteine. It catalyses the reaction adenosine(37) in tRNA + 2 reduced [2Fe-2S]-[ferredoxin] + 2 S-adenosyl-L-methionine = 2-methyladenosine(37) in tRNA + 5'-deoxyadenosine + L-methionine + 2 oxidized [2Fe-2S]-[ferredoxin] + S-adenosyl-L-homocysteine. Functionally, specifically methylates position 2 of adenine 2503 in 23S rRNA and position 2 of adenine 37 in tRNAs. m2A2503 modification seems to play a crucial role in the proofreading step occurring at the peptidyl transferase center and thus would serve to optimize ribosomal fidelity. This Francisella tularensis subsp. holarctica (strain LVS) protein is Dual-specificity RNA methyltransferase RlmN.